A 169-amino-acid chain; its full sequence is MTKKDKKQKVKVKTVETKEGEKIRVFEDLDSFETYLRGETEDEEFDHVHCQVRYYPPFVLHESHQDPEKIKESANSHNKKFVRHLHQHVEKHLLKDIKDSLGVPELKFKDKSKEENFNHVVWRYHAPTAVRDREFLVHVTVECHNDTAMVDVDYLTEPMQPAVQSEQVA.

Belongs to the RGI1 family.

The protein resides in the cell membrane. Functionally, involved in the control of energetic metabolism and significantly contribute to cell fitness, especially under respiratory growth conditions. The chain is Respiratory growth induced protein 1 (RGI1) from Eremothecium gossypii (strain ATCC 10895 / CBS 109.51 / FGSC 9923 / NRRL Y-1056) (Yeast).